Here is a 78-residue protein sequence, read N- to C-terminus: Acyl carrier protein (78 aa).

Residues 2-77 (SEIASRVKAI…DAVSYIEEHA (76 aa)) enclose the Carrier domain. S37 is subject to O-(pantetheine 4'-phosphoryl)serine.

This sequence belongs to the acyl carrier protein (ACP) family. In terms of processing, 4'-phosphopantetheine is transferred from CoA to a specific serine of apo-ACP by AcpS. This modification is essential for activity because fatty acids are bound in thioester linkage to the sulfhydryl of the prosthetic group.

Its subcellular location is the cytoplasm. It functions in the pathway lipid metabolism; fatty acid biosynthesis. In terms of biological role, carrier of the growing fatty acid chain in fatty acid biosynthesis. The sequence is that of Acyl carrier protein from Bacteroides thetaiotaomicron (strain ATCC 29148 / DSM 2079 / JCM 5827 / CCUG 10774 / NCTC 10582 / VPI-5482 / E50).